A 375-amino-acid chain; its full sequence is Odorant receptor 10 (375 aa).

The next 6 membrane-spanning stretches (helical) occupy residues 32-52 (ISII…GHSW), 58-78 (VIIK…TLIL), 125-145 (NLAL…FTGV), 167-187 (IIYL…IPFT), 250-270 (YICF…LFLL), and 279-299 (IVIV…FYWH).

It belongs to the insect chemoreceptor superfamily. Heteromeric odorant receptor channel (TC 1.A.69) family. In terms of tissue distribution, expressed in female antenna, maxillary palp and proboscis. Expressed in female body. Expressed in male tissues.

The protein resides in the cell membrane. Odorant receptor which complexes with Orco, a coreceptor, to form odorant-sensing units, providing sensitive and prolonged odorant signaling and calcium permeability. Can sense indole, 1-octen-3-ol, 3-methyindole and an insect repellent DEET. This Aedes albopictus (Asian tiger mosquito) protein is Odorant receptor 10.